The following is a 365-amino-acid chain: 3-dehydroquinate synthase (365 aa).

Residues 106-110 (GVIGD), 130-131 (TT), Lys142, Lys151, and 169-172 (FFAT) contribute to the NAD(+) site. Zn(2+)-binding residues include Glu184, His247, and His264.

It belongs to the sugar phosphate cyclases superfamily. Dehydroquinate synthase family. The cofactor is NAD(+). Requires Co(2+) as cofactor. Zn(2+) is required as a cofactor.

It localises to the cytoplasm. It catalyses the reaction 7-phospho-2-dehydro-3-deoxy-D-arabino-heptonate = 3-dehydroquinate + phosphate. It functions in the pathway metabolic intermediate biosynthesis; chorismate biosynthesis; chorismate from D-erythrose 4-phosphate and phosphoenolpyruvate: step 2/7. Catalyzes the conversion of 3-deoxy-D-arabino-heptulosonate 7-phosphate (DAHP) to dehydroquinate (DHQ). The sequence is that of 3-dehydroquinate synthase from Listeria innocua serovar 6a (strain ATCC BAA-680 / CLIP 11262).